The primary structure comprises 257 residues: Protein vip1 (257 aa).

One can recognise an RRM domain in the interval 3 to 76 (NQVIVTNISP…NKIQITSEDG (74 aa)). The segment at 74–99 (EDGGAASTTDQGGAGGDQAARQEDKP) is disordered. The segment covering 75–84 (DGGAASTTDQ) has biased composition (low complexity). Residues Ser132 and Ser177 each carry the phosphoserine modification. A disordered region spans residues 217 to 257 (ARRLADAKNQAEGTASPASSTPTAPAEKEPTAPTTESKTTE). Thr230 is subject to Phosphothreonine. Low complexity predominate over residues 230-257 (TASPASSTPTAPAEKEPTAPTTESKTTE). A phosphoserine mark is found at Ser232 and Ser235.

The polypeptide is Protein vip1 (vip1) (Schizosaccharomyces pombe (strain 972 / ATCC 24843) (Fission yeast)).